A 913-amino-acid polypeptide reads, in one-letter code: Eukaryotic translation initiation factor 3 subunit C (913 aa).

The segment at 1-22 is disordered; the sequence is MSRFFANGSDSESESSEEEVQA. Residues 11 to 20 show a composition bias toward acidic residues; sequence SESESSEEEV. A phosphoserine mark is found at Ser34, Ser165, Ser177, and Ser186. The interval 157–285 is disordered; that stretch reads FREAPDQESD…KRAEDDEDGE (129 aa). The segment covering 162 to 171 has biased composition (acidic residues); it reads DQESDVEEGE. The span at 172–184 shows a compositional bias: basic and acidic residues; sequence GEPHDSDGDRAGA. The span at 214-239 shows a compositional bias: acidic residues; it reads DEDDSDDSIDWDSDTESETESSEDEN. Residues 244–263 are compositionally biased toward basic and acidic residues; the sequence is MRERFLKRTTEKEDKDDDKR. Residues 264-276 are compositionally biased toward basic residues; it reads KDKRKEQKHKVRK. The PCI domain occupies 645-821; it reads FHMHINLELL…ETVVMHRSEP (177 aa). The disordered stretch occupies residues 856–913; sequence RGNMGNRDRGYNRNQNNQGGNWGGQRRDNRNQRNRNQRGHHKQQQQQQQQQVQTIEEE. Basic residues predominate over residues 887 to 898; sequence QRNRNQRGHHKQ.

This sequence belongs to the eIF-3 subunit C family. As to quaternary structure, component of the eukaryotic translation initiation factor 3 (eIF-3) complex. The eIF-3 complex interacts with pix.

It is found in the cytoplasm. Component of the eukaryotic translation initiation factor 3 (eIF-3) complex, which is involved in protein synthesis of a specialized repertoire of mRNAs and, together with other initiation factors, stimulates binding of mRNA and methionyl-tRNAi to the 40S ribosome. The eIF-3 complex specifically targets and initiates translation of a subset of mRNAs involved in cell proliferation. The chain is Eukaryotic translation initiation factor 3 subunit C from Drosophila mojavensis (Fruit fly).